Here is a 495-residue protein sequence, read N- to C-terminus: Sialin (495 aa).

Residues 1–24 (MKSPVSDLAPSDGEEGSDRTPLLQ) form a disordered region. Residue serine 3 is modified to Phosphoserine. The short motif at 22-23 (LL) is the Dileucine internalization motif element. The helical transmembrane segment at 42 to 62 (LAFLSFFGFFVLYSLRVNLSV) threads the bilayer. Asparagine 71, asparagine 77, and asparagine 95 each carry an N-linked (GlcNAc...) asparagine glycan. Transmembrane regions (helical) follow at residues 110–130 (WILG…GYVA), 137–157 (LLLG…PLAA), 159–179 (FGVG…GVTY), 201–221 (ISYA…GVIC), 228–248 (YVFY…ICLV), 289–309 (LPLW…YTLL), 329–349 (FLSA…GQAA), 366–386 (VFSL…GFIG), 392–412 (AVAF…GFSI), 424–444 (ILLG…PIIA), and 458–478 (TVFC…TLFA).

This sequence belongs to the major facilitator superfamily. Sodium/anion cotransporter family. As to expression, significantly expressed in lung endothelial cells, and much less in liver.

The protein localises to the basolateral cell membrane. It localises to the cytoplasmic vesicle. Its subcellular location is the secretory vesicle. It is found in the synaptic vesicle membrane. The protein resides in the lysosome membrane. The catalysed reaction is N-acetylneuraminate(in) + H(+)(in) = N-acetylneuraminate(out) + H(+)(out). It catalyses the reaction D-glucuronate(out) + H(+)(out) = D-glucuronate(in) + H(+)(in). It carries out the reaction 2 nitrate(out) + H(+)(out) = 2 nitrate(in) + H(+)(in). The enzyme catalyses L-aspartate(out) = L-aspartate(in). The catalysed reaction is L-glutamate(out) = L-glutamate(in). It catalyses the reaction N-acetyl-L-aspartyl-L-glutamate(out) = N-acetyl-L-aspartyl-L-glutamate(in). Functionally, multifunctional anion transporter that operates via two distinct transport mechanisms, namely proton-coupled anion cotransport and membrane potential-dependent anion transport. Electroneutral proton-coupled acidic monosaccharide symporter, with a sugar to proton stoichiometry of 1:1. Exports glucuronic acid and free sialic acid derived from sialoglycoconjugate degradation out of lysosomes, driven by outwardly directed lysosomal pH gradient. May regulate lysosome function and metabolism of sialylated conjugates that impact oligodendrocyte lineage differentiation and myelinogenesis in the central nervous system. Electrogenic proton-coupled nitrate symporter that transports nitrate ions across the basolateral membrane of salivary gland acinar cells, with nitrate to proton stoichiometry of 2:1. May contribute to nitrate clearance from serum by salivary glands, where it is further concentrated and secreted in the saliva. Uses membrane potential to drive the uptake of acidic amino acids and peptides into synaptic vesicles. Responsible for synaptic vesicular storage of L-aspartate and L-glutamate in pinealocytes as well as vesicular uptake of N-acetyl-L-aspartyl-L-glutamate neuropeptide, relevant to aspartegic-associated glutamatergic neurotransmission and activation of metabotropic receptors that inhibit subsequent transmitter release. Its function is as follows. Receptor for CM101, a polysaccharide produced by group B Streptococcus with antipathoangiogenic properties. In Ovis aries (Sheep), this protein is Sialin (SLC17A5).